The primary structure comprises 184 residues: MTAPQEPVDSTPESGENAATPGLEDDLSAELAALRAELEAAQATVKAQQEQVLRAAAEAENVRRRAQEDVAKARKFGIESFAESLVPVKDSLEAALAQPDQAAQAWREGVEVTLKQLTAAFERNLLKEIAPAQGDKFDPHLHQAISSVPADQPANTVLQLLQKGYVIADRTLRPALVVVSAGQG.

A disordered region spans residues 1 to 26 (MTAPQEPVDSTPESGENAATPGLEDD).

This sequence belongs to the GrpE family. In terms of assembly, homodimer.

It is found in the cytoplasm. Participates actively in the response to hyperosmotic and heat shock by preventing the aggregation of stress-denatured proteins, in association with DnaK and GrpE. It is the nucleotide exchange factor for DnaK and may function as a thermosensor. Unfolded proteins bind initially to DnaJ; upon interaction with the DnaJ-bound protein, DnaK hydrolyzes its bound ATP, resulting in the formation of a stable complex. GrpE releases ADP from DnaK; ATP binding to DnaK triggers the release of the substrate protein, thus completing the reaction cycle. Several rounds of ATP-dependent interactions between DnaJ, DnaK and GrpE are required for fully efficient folding. The chain is Protein GrpE from Bordetella bronchiseptica (strain ATCC BAA-588 / NCTC 13252 / RB50) (Alcaligenes bronchisepticus).